Here is a 249-residue protein sequence, read N- to C-terminus: Phosphatidylglycerol--prolipoprotein diacylglyceryl transferase (249 aa).

7 helical membrane-spanning segments follow: residues 11–31 (LKIY…VILL), 49–69 (AIVG…IVDI), 82–102 (LGNG…VYLY), 116–136 (LVVP…FLAG), 163–183 (LHPT…FLLW), 192–212 (GRVF…VEFL), and 223–243 (LSTS…VFNI). An a 1,2-diacyl-sn-glycero-3-phospho-(1'-sn-glycerol)-binding site is contributed by Arg129.

It belongs to the Lgt family.

It localises to the cell membrane. The catalysed reaction is L-cysteinyl-[prolipoprotein] + a 1,2-diacyl-sn-glycero-3-phospho-(1'-sn-glycerol) = an S-1,2-diacyl-sn-glyceryl-L-cysteinyl-[prolipoprotein] + sn-glycerol 1-phosphate + H(+). Its pathway is protein modification; lipoprotein biosynthesis (diacylglyceryl transfer). Catalyzes the transfer of the diacylglyceryl group from phosphatidylglycerol to the sulfhydryl group of the N-terminal cysteine of a prolipoprotein, the first step in the formation of mature lipoproteins. The sequence is that of Phosphatidylglycerol--prolipoprotein diacylglyceryl transferase from Clostridium tetani (strain Massachusetts / E88).